Consider the following 602-residue polypeptide: Elongation factor 4 (602 aa).

Residues 7–190 (KHIRNFCIVA…AVVQKVPAPS (184 aa)) enclose the tr-type G domain. Residues 19 to 24 (DHGKST) and 137 to 140 (NKID) contribute to the GTP site.

The protein belongs to the TRAFAC class translation factor GTPase superfamily. Classic translation factor GTPase family. LepA subfamily.

The protein localises to the cell membrane. The enzyme catalyses GTP + H2O = GDP + phosphate + H(+). In terms of biological role, required for accurate and efficient protein synthesis under certain stress conditions. May act as a fidelity factor of the translation reaction, by catalyzing a one-codon backward translocation of tRNAs on improperly translocated ribosomes. Back-translocation proceeds from a post-translocation (POST) complex to a pre-translocation (PRE) complex, thus giving elongation factor G a second chance to translocate the tRNAs correctly. Binds to ribosomes in a GTP-dependent manner. This Clostridium acetobutylicum (strain ATCC 824 / DSM 792 / JCM 1419 / IAM 19013 / LMG 5710 / NBRC 13948 / NRRL B-527 / VKM B-1787 / 2291 / W) protein is Elongation factor 4.